A 338-amino-acid polypeptide reads, in one-letter code: 1-aminocyclopropane-1-carboxylate deaminase (338 aa).

The residue at position 51 (K51) is an N6-(pyridoxal phosphate)lysine. The Nucleophile role is filled by S78.

The protein belongs to the ACC deaminase/D-cysteine desulfhydrase family. As to quaternary structure, homotrimer. The cofactor is pyridoxal 5'-phosphate.

The catalysed reaction is 1-aminocyclopropane-1-carboxylate + H2O = 2-oxobutanoate + NH4(+). Its function is as follows. Catalyzes a cyclopropane ring-opening reaction, the irreversible conversion of 1-aminocyclopropane-1-carboxylate (ACC) to ammonia and alpha-ketobutyrate. Allows growth on ACC as a nitrogen source. The chain is 1-aminocyclopropane-1-carboxylate deaminase from Burkholderia pseudomallei (strain 1710b).